A 293-amino-acid chain; its full sequence is Ribosomal protein L11 methyltransferase (293 aa).

S-adenosyl-L-methionine is bound by residues Thr145, Gly166, Asp188, and Asn230.

The protein belongs to the methyltransferase superfamily. PrmA family.

It is found in the cytoplasm. It carries out the reaction L-lysyl-[protein] + 3 S-adenosyl-L-methionine = N(6),N(6),N(6)-trimethyl-L-lysyl-[protein] + 3 S-adenosyl-L-homocysteine + 3 H(+). Methylates ribosomal protein L11. The sequence is that of Ribosomal protein L11 methyltransferase from Edwardsiella ictaluri (strain 93-146).